A 445-amino-acid chain; its full sequence is POU domain, class 3, transcription factor 2 (445 aa).

4 disordered regions span residues 63–173, 203–269, 336–361, and 411–445; these read TALS…WRSA, LGAG…TPTS, EADS…KKRT, and EKRM…TPVQ. A compositionally biased stretch (gly residues) spans 68 to 90; sequence GGSGGGGGGGGGGGGGGGGGGDG. The span at 125–151 shows a compositional bias: low complexity; that stretch reads QQQHQQQQQQQQQQQQQQQQQQQQQQQ. Basic and acidic residues predominate over residues 217 to 226; sequence LRDAHDEPHH. Over residues 227–237 the composition is skewed to basic residues; sequence ADHHPHPHSHP. Over residues 239-253 the composition is skewed to pro residues; the sequence is QQPPPPPPPQGPPGH. In terms of domain architecture, POU-specific spans 264-338; it reads EDTPTSDDLE…LLNKWLEEAD (75 aa). The residue at position 343 (serine 343) is a Phosphoserine. Residues 356-415 constitute a DNA-binding region (homeobox); it reads KRKKRTSIEVSVKGALESHFLKCPKPSAQEITSLADSLQLEKEVVRVWFCNRRQKEKRMT.

The protein belongs to the POU transcription factor family. Class-3 subfamily. Interacts with PQBP1. Interaction with ISL1. Expressed specifically at high levels in the brain.

It localises to the nucleus. Functionally, transcription factor that plays a key role in neuronal differentiation. Binds preferentially to the recognition sequence which consists of two distinct half-sites, ('GCAT') and ('TAAT'), separated by a non-conserved spacer region of 0, 2, or 3 nucleotides. Acts as a transcriptional activator when binding cooperatively with SOX4, SOX11, or SOX12 to gene promoters. The combination of three transcription factors, ASCL1, POU3F2/BRN2 and MYT1L, is sufficient to reprogram fibroblasts and other somatic cells into induced neuronal (iN) cells in vitro. Acts downstream of ASCL1, accessing chromatin that has been opened by ASCL1, and promotes transcription of neuronal genes. The protein is POU domain, class 3, transcription factor 2 (Pou3f2) of Rattus norvegicus (Rat).